Here is a 73-residue protein sequence, read N- to C-terminus: Translation initiation factor IF-1 (73 aa).

The S1-like domain maps to 1–73 (MSEKEAGIEV…TRGRITYRDK (73 aa)).

This sequence belongs to the IF-1 family. In terms of assembly, component of the 30S ribosomal translation pre-initiation complex which assembles on the 30S ribosome in the order IF-2 and IF-3, IF-1 and N-formylmethionyl-tRNA(fMet); mRNA recruitment can occur at any time during PIC assembly.

It is found in the cytoplasm. One of the essential components for the initiation of protein synthesis. Stabilizes the binding of IF-2 and IF-3 on the 30S subunit to which N-formylmethionyl-tRNA(fMet) subsequently binds. Helps modulate mRNA selection, yielding the 30S pre-initiation complex (PIC). Upon addition of the 50S ribosomal subunit IF-1, IF-2 and IF-3 are released leaving the mature 70S translation initiation complex. This is Translation initiation factor IF-1 from Anaeromyxobacter sp. (strain Fw109-5).